Consider the following 634-residue polypeptide: Chaperone protein HtpG (634 aa).

The interval 1 to 342 (MSVETQKETL…SNDLSLNVSR (342 aa)) is a; substrate-binding. The b stretch occupies residues 343–559 (EILQKDPVID…EQDLGLQMRQ (217 aa)). A c region spans residues 560 to 634 (ILEASGQKVP…LNKLLVELSA (75 aa)).

Belongs to the heat shock protein 90 family. Homodimer.

It localises to the cytoplasm. Functionally, molecular chaperone. Has ATPase activity. The polypeptide is Chaperone protein HtpG (Pseudomonas paraeruginosa (strain DSM 24068 / PA7) (Pseudomonas aeruginosa (strain PA7))).